A 199-amino-acid chain; its full sequence is DNA dC-&gt;dU-editing enzyme APOBEC-3A (199 aa).

In terms of domain architecture, CMP/dCMP-type deaminase spans 27–143 (GRHKTYLCYE…PLYKEALQML (117 aa)). H70 contacts Zn(2+). The Proton donor role is filled by E72. Zn(2+)-binding residues include C101 and C106.

The protein belongs to the cytidine and deoxycytidylate deaminase family. As to quaternary structure, interacts with AGO2. Interacts with TRIB3 (via N-terminus). Zn(2+) is required as a cofactor. Expressed in peripheral leukocytes with higher expression in CD14-positive phagocytic cells. Highly expressed in keratinocytes and in periphery blood monocytes. Also detected in non-lymphoid tissues including lung and adipose tissues. Found at high levels in colorectal adenocarcinoma, Burkitt's lymphoma and chronic myelogenous leukemia.

The protein localises to the nucleus. The protein resides in the cytoplasm. The enzyme catalyses a 2'-deoxycytidine in single-stranded DNA + H2O + H(+) = a 2'-deoxyuridine in single-stranded DNA + NH4(+). In terms of biological role, DNA deaminase (cytidine deaminase) with restriction activity against viruses, foreign DNA and mobility of retrotransposons. Exhibits antiviral activity against adeno-associated virus (AAV) and human T-cell leukemia virus type 1 (HTLV-1) and may inhibit the mobility of LTR and non-LTR retrotransposons. Selectively targets single-stranded DNA and can deaminate both methylcytosine and cytosine in foreign DNA. Can induce somatic hypermutation in the nuclear and mitochondrial DNA. May also play a role in the epigenetic regulation of gene expression through the process of active DNA demethylation. This chain is DNA dC-&gt;dU-editing enzyme APOBEC-3A (APOBEC3A), found in Homo sapiens (Human).